Reading from the N-terminus, the 157-residue chain is Transcription elongation factor GreA (157 aa).

The protein belongs to the GreA/GreB family.

Its function is as follows. Necessary for efficient RNA polymerase transcription elongation past template-encoded arresting sites. The arresting sites in DNA have the property of trapping a certain fraction of elongating RNA polymerases that pass through, resulting in locked ternary complexes. Cleavage of the nascent transcript by cleavage factors such as GreA or GreB allows the resumption of elongation from the new 3'terminus. GreA releases sequences of 2 to 3 nucleotides. The chain is Transcription elongation factor GreA from Brucella anthropi (strain ATCC 49188 / DSM 6882 / CCUG 24695 / JCM 21032 / LMG 3331 / NBRC 15819 / NCTC 12168 / Alc 37) (Ochrobactrum anthropi).